Consider the following 156-residue polypeptide: V-type proton ATPase 16 kDa proteolipid subunit c (156 aa).

Residues 1–7 are Lumenal-facing; sequence MAENPIY. A helical transmembrane segment spans residues 8-30; sequence GPFFGVMGAASAIIFSALGAAYG. Topologically, residues 31–52 are cytoplasmic; that stretch reads TAKSGTGIAAMSVMRPELIMKS. The helical transmembrane segment at 53–73 threads the bilayer; it reads IIPVVMAGIIAIYGLVVAVLI. The Lumenal portion of the chain corresponds to 74-92; sequence AGSLDAPSNNYTLYKGFIH. The helical transmembrane segment at 93–114 threads the bilayer; sequence LGAGLAVGFSGLAAGFAIGIVG. The Cytoplasmic segment spans residues 115–126; the sequence is DAGVRGTAQQPR. A helical membrane pass occupies residues 127 to 152; the sequence is LFVGMILILIFAEVLGLYGLIVAIYL. At 153–156 the chain is on the lumenal side; it reads YTKQ.

The protein belongs to the V-ATPase proteolipid subunit family. In terms of assembly, V-ATPase is a heteromultimeric enzyme made up of two complexes: the ATP-hydrolytic V1 complex and the proton translocation V0 complex. The V1 complex consists of three catalytic AB heterodimers that form a heterohexamer, three peripheral stalks each consisting of EG heterodimers, one central rotor including subunits D and F, and the regulatory subunits C and H. The proton translocation complex V0 consists of the proton transport subunit a, a ring of proteolipid subunits c9c'', rotary subunit d, subunits e and f, and the accessory subunits VhaAC45 and ATP6AP2.

The protein localises to the membrane. Its function is as follows. Proton-conducting pore forming subunit of the V0 complex of vacuolar(H+)-ATPase (V-ATPase), a multisubunit enzyme composed of a peripheral complex (V1) that hydrolyzes ATP and a membrane integral complex (V0) that translocates protons. V-ATPase is responsible for acidifying and maintaining the pH of intracellular compartments and in some cell types, is targeted to the plasma membrane, where it is responsible for acidifying the extracellular environment. This Heliothis virescens (Tobacco budworm moth) protein is V-type proton ATPase 16 kDa proteolipid subunit c (VHA16).